Consider the following 789-residue polypeptide: Aconitate hydratase, mitochondrial (789 aa).

The transit peptide at 1–32 (MFCKISRAPARMGSRIFTQSTLRSFSCAPVAA) directs the protein to the mitochondrion. Residues glutamine 106 and 199 to 201 (DSH) each bind substrate. Positions 392, 455, and 458 each coordinate [4Fe-4S] cluster. Residues arginine 481, arginine 486, arginine 613, and 676 to 677 (SR) contribute to the substrate site.

Belongs to the aconitase/IPM isomerase family. Monomer. [4Fe-4S] cluster serves as cofactor.

It localises to the mitochondrion. It carries out the reaction citrate = D-threo-isocitrate. It functions in the pathway carbohydrate metabolism; tricarboxylic acid cycle; isocitrate from oxaloacetate: step 2/2. In terms of biological role, catalyzes the isomerization of citrate to isocitrate via cis-aconitate, a step in the citric acid cycle. This is Aconitate hydratase, mitochondrial from Schizosaccharomyces pombe (strain 972 / ATCC 24843) (Fission yeast).